We begin with the raw amino-acid sequence, 132 residues long: Glycerol-3-phosphate cytidylyltransferase (132 aa).

CTP is bound by residues 9–10 (TY) and 14–17 (HYGH). Residue Lys-44 coordinates substrate. A CTP-binding site is contributed by Lys-46. Position 77 (Lys-77) interacts with substrate. 113–120 (RTEGISTT) is a binding site for CTP.

Belongs to the cytidylyltransferase family. Homotetramer or homodimer.

The protein localises to the cytoplasm. The catalysed reaction is sn-glycerol 3-phosphate + CTP + H(+) = CDP-glycerol + diphosphate. It functions in the pathway cell wall biogenesis; poly(ribitol phosphate) teichoic acid biosynthesis. Catalyzes the transfer of the cytidylyl group of CTP to sn-glycerol 3-phosphate so the activated glycerol 3-phosphate can be used for teichoic acid synthesis, via incorporation into both the linkage unit by TarB and TarF. The polypeptide is Glycerol-3-phosphate cytidylyltransferase (Staphylococcus aureus (strain NCTC 8325 / PS 47)).